The primary structure comprises 320 residues: 2-oxoglutarate-dependent dioxygenase thnC (320 aa).

A Fe2OG dioxygenase domain is found at Pro174–Asp278. His199, Asp201, and His258 together coordinate Fe cation. 2-oxoglutarate is bound at residue Arg268.

The protein belongs to the iron/ascorbate-dependent oxidoreductase family. The cofactor is Fe(2+).

The catalysed reaction is trihazone A + 2-oxoglutarate + O2 + H(+) = trihazone D + succinate + 2 CO2 + H2O. The protein operates within secondary metabolite biosynthesis. Functionally, 2-oxoglutarate-dependent dioxygenase; part of the gene cluster that produces the tetronate natural products trihazones. ThnC catalyzes the oxidative decarboxylation of trihazone A to trihazone D. The C4 hydrogen is first abstracted by the iron-oxo species generated in ThnC to give a tertiary radical at C4. This is followed by decarboxylation and removal of the second electron by the FeIII-OH center to give trihazone D. The pathway begins with the formation of trihazone A by the hybrid PKS-NRPS synthetase thnA and the trans-enoyl reductase thnE. Trihazone A is further decarboxylated by the 2-oxoglutarate-dependent dioxygenase thnC to produce trihazone D. The function of the FAD-dependent monooxygenase thnD has still to be identified. This Trichoderma harzianum (Hypocrea lixii) protein is 2-oxoglutarate-dependent dioxygenase thnC.